A 387-amino-acid polypeptide reads, in one-letter code: Paralemmin-1 (387 aa).

An N-acetylmethionine modification is found at Met-1. A coiled-coil region spans residues 7-104 (ETISQQERLQ…IEELENADTL (98 aa)). Disordered regions lie at residues 22 to 78 (RRRQ…QEDE) and 98 to 133 (LENADTLPAPVKETQVAPSPGPVVPAPCPAQEDRKA). Composition is skewed to basic and acidic residues over residues 25-41 (QAEVENRRRQLEDDRRQ) and 69-78 (DMRKQMQEDE). Ser-116 carries the post-translational modification Phosphoserine. Residues 116–125 (SPGPVVPAPC) are compositionally biased toward pro residues. Residues Thr-142 and Thr-146 each carry the phosphothreonine modification. Position 163 is a phosphoserine (Ser-163). A Phosphothreonine modification is found at Thr-244. Ser-246 is modified (phosphoserine). 2 disordered regions span residues 246-297 (SEAG…QEPP) and 334-378 (AAEP…DMKK). Positions 258–273 (GPSEEVVRTTPSRREI) are enriched in basic and acidic residues. Over residues 286-297 (GPPGIQPGQEPP) the composition is skewed to low complexity. 2 positions are modified to phosphoserine: Ser-346 and Ser-369. Residues Cys-381 and Cys-383 are each lipidated (S-palmitoyl cysteine). Cys-384 is modified (cysteine methyl ester). Cys-384 is lipidated: S-farnesyl cysteine. Positions 385 to 387 (SIM) are cleaved as a propeptide — removed in mature form.

This sequence belongs to the paralemmin family. Interacts with dopamine receptor DRD3. Post-translationally, phosphorylated.

It localises to the cell membrane. Its subcellular location is the cell projection. It is found in the filopodium membrane. The protein localises to the axon. The protein resides in the dendrite. It localises to the dendritic spine. Its subcellular location is the basolateral cell membrane. It is found in the apicolateral cell membrane. Involved in plasma membrane dynamics and cell process formation. Necessary for axonal and dendritic filopodia induction, for dendritic spine maturation and synapse formation in a palmitoylation-dependent manner. In Sus scrofa (Pig), this protein is Paralemmin-1 (PALM).